A 195-amino-acid polypeptide reads, in one-letter code: Dihydroneopterin triphosphate diphosphatase (195 aa).

The active-site Proton acceptor is Asp-73.

It belongs to the HAM1 NTPase family. Mn(2+) is required as a cofactor.

The catalysed reaction is 7,8-dihydroneopterin 3'-triphosphate + H2O = 7,8-dihydroneopterin 3'-phosphate + diphosphate + H(+). Its pathway is cofactor biosynthesis; tetrahydrofolate biosynthesis. In terms of biological role, pyrophosphatase involved in the biosynthesis of tetrahydrofolate. Catalyzes the hydrolysis of dihydroneopterin triphosphate (DHNTP) to dihydroneopterin monophosphate (DHNMP) and pyrophosphate. Shows a strict substrate specificity. Has only weak activity with GTP, ITP, XTP and dTTP, and cannot use ATP, UTP, CTP, NAD(+), NADH, diadenosine triphosphate, diadenosine tetraphosphate, ADP-ribose and UDP-glucose. This chain is Dihydroneopterin triphosphate diphosphatase, found in Limosilactobacillus reuteri (strain DSM 20016) (Lactobacillus reuteri).